The primary structure comprises 277 residues: uncharacterized protein (277 aa).

A signal peptide spans Met-1–Ala-25. Residue Cys-26 is the site of N-palmitoyl cysteine attachment. Residue Cys-26 is the site of S-diacylglycerol cysteine attachment.

It belongs to the MG439/MG440 family.

It is found in the cell membrane. This is an uncharacterized protein from Mycoplasma pneumoniae (strain ATCC 29342 / M129 / Subtype 1) (Mycoplasmoides pneumoniae).